The sequence spans 766 residues: Phosphoribosylformylglycinamidine synthase subunit PurL (766 aa).

His-49 is an active-site residue. ATP contacts are provided by Tyr-52 and Lys-91. Residue Glu-93 participates in Mg(2+) binding. Residues 94–97 (SHNH) and Arg-116 contribute to the substrate site. His-95 functions as the Proton acceptor in the catalytic mechanism. Asp-117 contributes to the Mg(2+) binding site. Gln-240 provides a ligand contact to substrate. Asp-268 lines the Mg(2+) pocket. Position 312 to 314 (312 to 314 (ESQ)) interacts with substrate. Residues Asp-508 and Gly-545 each contribute to the ATP site. Residue Asn-546 coordinates Mg(2+). Ser-548 contributes to the substrate binding site.

It belongs to the FGAMS family. As to quaternary structure, monomer. Part of the FGAM synthase complex composed of 1 PurL, 1 PurQ and 2 PurS subunits.

It localises to the cytoplasm. The enzyme catalyses N(2)-formyl-N(1)-(5-phospho-beta-D-ribosyl)glycinamide + L-glutamine + ATP + H2O = 2-formamido-N(1)-(5-O-phospho-beta-D-ribosyl)acetamidine + L-glutamate + ADP + phosphate + H(+). It functions in the pathway purine metabolism; IMP biosynthesis via de novo pathway; 5-amino-1-(5-phospho-D-ribosyl)imidazole from N(2)-formyl-N(1)-(5-phospho-D-ribosyl)glycinamide: step 1/2. Part of the phosphoribosylformylglycinamidine synthase complex involved in the purines biosynthetic pathway. Catalyzes the ATP-dependent conversion of formylglycinamide ribonucleotide (FGAR) and glutamine to yield formylglycinamidine ribonucleotide (FGAM) and glutamate. The FGAM synthase complex is composed of three subunits. PurQ produces an ammonia molecule by converting glutamine to glutamate. PurL transfers the ammonia molecule to FGAR to form FGAM in an ATP-dependent manner. PurS interacts with PurQ and PurL and is thought to assist in the transfer of the ammonia molecule from PurQ to PurL. The chain is Phosphoribosylformylglycinamidine synthase subunit PurL from Synechococcus sp. (strain CC9902).